A 477-amino-acid polypeptide reads, in one-letter code: MAKDALIVKTTPLPQSRISFELEIPSETCKTCVNETISTISRSAKIPGFRLGKIPKQVLIQRIGITQLHASALEKIIDKSWQEALKIKSIEPLSEPELVDGFESLLAKFSPEKSLKVTLQTDVAPELKLKKSKGLSVEISKTKFDPKSIDEALEKSRNQFANIIPVTNRAAKLGDIAVVSFKGKYKDSGKEIDGGTSESMDLELEKNKMIPGFVEGIVKMKIGDTKTLNLKFPEDYSHEDSRGKEAIFEVNLKDLKEKELPELNDDFAKQSGNKESLKELKKDIEKQLKDNFEKTQKDIKIEALLDALTNELVTEIPKSMIDLEVRNNIEQTAQRFAQQGLDVKSTFTPELVKSLAESTRPQAEKNVQRNLALKALAEKENITIDKSEIDLKMKEYDDVISQSSKQIDIKKLTEVISNDLLKEKLIIWLEENSEVNEKTTKTSKATKTSKTTKATKTATKTTKTTKTTKTQNKKEKK.

Positions 174–261 (GDIAVVSFKG…LKDLKEKELP (88 aa)) constitute a PPIase FKBP-type domain. Residues 435–477 (VNEKTTKTSKATKTSKTTKATKTATKTTKTTKTTKTQNKKEKK) form a disordered region. Positions 442–470 (TSKATKTSKTTKATKTATKTTKTTKTTKT) are enriched in low complexity.

This sequence belongs to the FKBP-type PPIase family. Tig subfamily.

It localises to the cytoplasm. It carries out the reaction [protein]-peptidylproline (omega=180) = [protein]-peptidylproline (omega=0). In terms of biological role, involved in protein export. Acts as a chaperone by maintaining the newly synthesized protein in an open conformation. Functions as a peptidyl-prolyl cis-trans isomerase. This chain is Trigger factor, found in Prochlorococcus marinus (strain MIT 9301).